The primary structure comprises 513 residues: ATP synthase subunit alpha (513 aa).

Position 169 to 176 (169 to 176 (GDRQTGKT)) interacts with ATP.

It belongs to the ATPase alpha/beta chains family. In terms of assembly, F-type ATPases have 2 components, CF(1) - the catalytic core - and CF(0) - the membrane proton channel. CF(1) has five subunits: alpha(3), beta(3), gamma(1), delta(1), epsilon(1). CF(0) has three main subunits: a(1), b(2) and c(9-12). The alpha and beta chains form an alternating ring which encloses part of the gamma chain. CF(1) is attached to CF(0) by a central stalk formed by the gamma and epsilon chains, while a peripheral stalk is formed by the delta and b chains.

Its subcellular location is the cell inner membrane. It catalyses the reaction ATP + H2O + 4 H(+)(in) = ADP + phosphate + 5 H(+)(out). Functionally, produces ATP from ADP in the presence of a proton gradient across the membrane. The alpha chain is a regulatory subunit. This Shewanella loihica (strain ATCC BAA-1088 / PV-4) protein is ATP synthase subunit alpha.